A 316-amino-acid polypeptide reads, in one-letter code: Pantothenate kinase (316 aa).

Residue 95–102 (GSVAVGKS) coordinates ATP.

This sequence belongs to the prokaryotic pantothenate kinase family.

It is found in the cytoplasm. It carries out the reaction (R)-pantothenate + ATP = (R)-4'-phosphopantothenate + ADP + H(+). It functions in the pathway cofactor biosynthesis; coenzyme A biosynthesis; CoA from (R)-pantothenate: step 1/5. The polypeptide is Pantothenate kinase (Shewanella loihica (strain ATCC BAA-1088 / PV-4)).